Reading from the N-terminus, the 448-residue chain is Glucose-6-phosphate isomerase (448 aa).

Glu-288 serves as the catalytic Proton donor. Catalysis depends on residues His-309 and Lys-423.

Belongs to the GPI family.

The protein localises to the cytoplasm. It carries out the reaction alpha-D-glucose 6-phosphate = beta-D-fructose 6-phosphate. It participates in carbohydrate biosynthesis; gluconeogenesis. Its pathway is carbohydrate degradation; glycolysis; D-glyceraldehyde 3-phosphate and glycerone phosphate from D-glucose: step 2/4. In terms of biological role, catalyzes the reversible isomerization of glucose-6-phosphate to fructose-6-phosphate. This Fusobacterium nucleatum subsp. nucleatum (strain ATCC 25586 / DSM 15643 / BCRC 10681 / CIP 101130 / JCM 8532 / KCTC 2640 / LMG 13131 / VPI 4355) protein is Glucose-6-phosphate isomerase.